Consider the following 192-residue polypeptide: UPF0312 protein PputW619_0484 (192 aa).

A signal peptide spans 1 to 23 (MLKKTFAALALGTALLSAGQAMA).

The protein belongs to the UPF0312 family. Type 1 subfamily.

The protein resides in the periplasm. In Pseudomonas putida (strain W619), this protein is UPF0312 protein PputW619_0484.